The following is a 317-amino-acid chain: Porphobilinogen deaminase (317 aa).

At C242 the chain carries S-(dipyrrolylmethanemethyl)cysteine.

The protein belongs to the HMBS family. As to quaternary structure, monomer. Requires dipyrromethane as cofactor.

The enzyme catalyses 4 porphobilinogen + H2O = hydroxymethylbilane + 4 NH4(+). Its pathway is porphyrin-containing compound metabolism; protoporphyrin-IX biosynthesis; coproporphyrinogen-III from 5-aminolevulinate: step 2/4. In terms of biological role, tetrapolymerization of the monopyrrole PBG into the hydroxymethylbilane pre-uroporphyrinogen in several discrete steps. In Colwellia psychrerythraea (strain 34H / ATCC BAA-681) (Vibrio psychroerythus), this protein is Porphobilinogen deaminase.